The sequence spans 328 residues: Basic leucine zipper (bZIP) transcription factor atfB (328 aa).

The tract at residues 1 to 39 is disordered; that stretch reads MLPEQSAFGRSAMPGSDAVNPGPSPFAPPPNSFSGDFLG. Residues 22 to 31 show a composition bias toward pro residues; that stretch reads GPSPFAPPPN. The interval 163-202 is basic motif; that stretch reads KAKREKFLERNRLAASKCRQKKKEHTQLLESRYREQSDKK. The region spanning 163 to 226 is the bZIP domain; the sequence is KAKREKFLER…LGLKNEVLKH (64 aa). Residues 205-219 form a leucine-zipper region; sequence LVSEIARLRSEILGL. The segment at 250-313 is disordered; it reads TTAPDLTDVP…SEASVLTENS (64 aa). Over residues 262-277 the composition is skewed to polar residues; the sequence is ASSSEGPMTPRPQQAL. Basic and acidic residues predominate over residues 283-305; it reads DPLHLEPSRADGSTDHSVRRDSE.

The protein belongs to the bZIP family. ATF subfamily.

It localises to the nucleus. Functionally, transcription factor that acts as a key player in the regulatory circuit that integrates secondary metabolism and cellular response to oxidative stress. Regulates the genes involved in development, as well as osmotic, oxidative, and cell wall stresses. Participates in the caspofungin paradoxical effect (CPE), where fungi grow beyond the minimum inhibitory concentration of caspofungin. Plays a role in virulence. The protein is Basic leucine zipper (bZIP) transcription factor atfB of Aspergillus fumigatus (strain ATCC MYA-4609 / CBS 101355 / FGSC A1100 / Af293) (Neosartorya fumigata).